Here is a 434-residue protein sequence, read N- to C-terminus: Nicotinate phosphoribosyltransferase (434 aa).

Residue His-242 is modified to Phosphohistidine; by autocatalysis.

Belongs to the NAPRTase family. Post-translationally, transiently phosphorylated on a His residue during the reaction cycle. Phosphorylation strongly increases the affinity for substrates and increases the rate of nicotinate D-ribonucleotide production. Dephosphorylation regenerates the low-affinity form of the enzyme, leading to product release.

It carries out the reaction nicotinate + 5-phospho-alpha-D-ribose 1-diphosphate + ATP + H2O = nicotinate beta-D-ribonucleotide + ADP + phosphate + diphosphate. It participates in cofactor biosynthesis; NAD(+) biosynthesis; nicotinate D-ribonucleotide from nicotinate: step 1/1. Catalyzes the synthesis of beta-nicotinate D-ribonucleotide from nicotinate and 5-phospho-D-ribose 1-phosphate at the expense of ATP. This chain is Nicotinate phosphoribosyltransferase, found in Rhizobium leguminosarum bv. trifolii (strain WSM2304).